The sequence spans 254 residues: 4-hydroxy-tetrahydrodipicolinate reductase (254 aa).

Residues 8–13 (GASGKM), 87–89 (GTT), and 111–114 (ATNM) each bind NAD(+). His143 (proton donor/acceptor) is an active-site residue. (S)-2,3,4,5-tetrahydrodipicolinate is bound at residue His144. Lys147 (proton donor) is an active-site residue. 153–154 (GT) provides a ligand contact to (S)-2,3,4,5-tetrahydrodipicolinate.

The protein belongs to the DapB family.

The protein resides in the cytoplasm. It carries out the reaction (S)-2,3,4,5-tetrahydrodipicolinate + NAD(+) + H2O = (2S,4S)-4-hydroxy-2,3,4,5-tetrahydrodipicolinate + NADH + H(+). The catalysed reaction is (S)-2,3,4,5-tetrahydrodipicolinate + NADP(+) + H2O = (2S,4S)-4-hydroxy-2,3,4,5-tetrahydrodipicolinate + NADPH + H(+). It functions in the pathway amino-acid biosynthesis; L-lysine biosynthesis via DAP pathway; (S)-tetrahydrodipicolinate from L-aspartate: step 4/4. In terms of biological role, catalyzes the conversion of 4-hydroxy-tetrahydrodipicolinate (HTPA) to tetrahydrodipicolinate. The sequence is that of 4-hydroxy-tetrahydrodipicolinate reductase from Campylobacter fetus subsp. fetus (strain 82-40).